We begin with the raw amino-acid sequence, 526 residues long: GMP synthase [glutamine-hydrolyzing] (526 aa).

Residues 9-207 (RILILNFGSQ…VLDICSCQGR (199 aa)) enclose the Glutamine amidotransferase type-1 domain. The active-site Nucleophile is the Cys86. Catalysis depends on residues His181 and Glu183. The 194-residue stretch at 208–401 (WTPNNIKENI…LGLPFHMLYR (194 aa)) folds into the GMPS ATP-PPase domain. 235–241 (SGGVDST) contacts ATP.

In terms of assembly, homodimer.

The enzyme catalyses XMP + L-glutamine + ATP + H2O = GMP + L-glutamate + AMP + diphosphate + 2 H(+). The protein operates within purine metabolism; GMP biosynthesis; GMP from XMP (L-Gln route): step 1/1. Its function is as follows. Catalyzes the synthesis of GMP from XMP. In Baumannia cicadellinicola subsp. Homalodisca coagulata, this protein is GMP synthase [glutamine-hydrolyzing].